Reading from the N-terminus, the 159-residue chain is ATP synthase subunit b 2 (159 aa).

Residues 1-21 (MDATFWAFIALVIFVAIVVYM) traverse the membrane as a helical segment.

It belongs to the ATPase B chain family. As to quaternary structure, F-type ATPases have 2 components, F(1) - the catalytic core - and F(0) - the membrane proton channel. F(1) has five subunits: alpha(3), beta(3), gamma(1), delta(1), epsilon(1). F(0) has three main subunits: a(1), b(2) and c(10-14). The alpha and beta chains form an alternating ring which encloses part of the gamma chain. F(1) is attached to F(0) by a central stalk formed by the gamma and epsilon chains, while a peripheral stalk is formed by the delta and b chains.

The protein localises to the cell inner membrane. In terms of biological role, f(1)F(0) ATP synthase produces ATP from ADP in the presence of a proton or sodium gradient. F-type ATPases consist of two structural domains, F(1) containing the extramembraneous catalytic core and F(0) containing the membrane proton channel, linked together by a central stalk and a peripheral stalk. During catalysis, ATP synthesis in the catalytic domain of F(1) is coupled via a rotary mechanism of the central stalk subunits to proton translocation. Its function is as follows. Component of the F(0) channel, it forms part of the peripheral stalk, linking F(1) to F(0). In Brucella suis (strain ATCC 23445 / NCTC 10510), this protein is ATP synthase subunit b 2.